We begin with the raw amino-acid sequence, 584 residues long: uncharacterized protein (584 aa).

The span at 353 to 375 (NSEGQTNAETSLNGKGTVGNQWA) shows a compositional bias: polar residues. Disordered stretches follow at residues 353–379 (NSEG…SPPE), 400–426 (LESK…VSSH), and 463–565 (SVDS…CNSG). The span at 502–511 (KANSPASSRL) shows a compositional bias: polar residues. Residues 516 to 535 (DSSHLSKHVNFDKNPDHSEA) show a composition bias toward basic and acidic residues.

This is an uncharacterized protein from Mus musculus (Mouse).